The sequence spans 335 residues: Photosystem II assembly lipoprotein Ycf48 (335 aa).

An N-terminal signal peptide occupies residues 1 to 23 (MSRLFSNLFNLLLIAAIGFGLSG). C24 carries the N-palmitoyl cysteine lipid modification. C24 carries S-diacylglycerol cysteine lipidation.

It belongs to the Ycf48 family. In terms of assembly, part of early PSII assembly complexes which includes D1 (psbA) and PsbI; not found in mature PSII. Binds to the lumenal side of PSII complexes. Interacts with YidC.

It localises to the cellular thylakoid membrane. Its function is as follows. A factor required for optimal assembly of photosystem II (PSII), acting in the early stages of PSII assembly. Also plays a role in replacement of photodamaged D1 (psbA). Assists YidC in synthesis of chlorophyll-binding proteins. The polypeptide is Photosystem II assembly lipoprotein Ycf48 (Prochlorococcus marinus (strain MIT 9313)).